We begin with the raw amino-acid sequence, 557 residues long: Potassium-transporting ATPase potassium-binding subunit (557 aa).

The next 10 membrane-spanning stretches (helical) occupy residues 6-26 (IQLL…GLGL), 59-79 (ALSL…ILFF), 127-147 (AGLT…LLAL), 172-192 (LYVL…FGVV), 247-267 (ISNF…VFLY), 278-298 (WAIF…VWTF), 363-383 (IVFG…LLTV), 410-430 (ILGI…SVSV), 475-495 (VMIA…VLVI), and 520-540 (FYIL…FPVL).

The protein belongs to the KdpA family. As to quaternary structure, the system is composed of three essential subunits: KdpA, KdpB and KdpC.

It is found in the cell inner membrane. In terms of biological role, part of the high-affinity ATP-driven potassium transport (or Kdp) system, which catalyzes the hydrolysis of ATP coupled with the electrogenic transport of potassium into the cytoplasm. This subunit binds the periplasmic potassium ions and delivers the ions to the membrane domain of KdpB through an intramembrane tunnel. The sequence is that of Potassium-transporting ATPase potassium-binding subunit from Leptospira interrogans serogroup Icterohaemorrhagiae serovar Lai (strain 56601).